The chain runs to 183 residues: Ribosome-recycling factor (183 aa).

It belongs to the RRF family.

It is found in the cytoplasm. Functionally, responsible for the release of ribosomes from messenger RNA at the termination of protein biosynthesis. May increase the efficiency of translation by recycling ribosomes from one round of translation to another. The sequence is that of Ribosome-recycling factor from Ureaplasma parvum serovar 3 (strain ATCC 27815 / 27 / NCTC 11736).